The chain runs to 723 residues: F-box protein MAX2 homolog B (723 aa).

One can recognise an F-box domain in the interval 2–55 (AKTPIPFTTLNDLPDVILSNIIAAVSDTRSRNATALVCHKWLVLERSTRTSLTL).

In terms of assembly, part of a putative SCF (SKP1/Cullin/F-box) ubiquitin ligase complex. Interacts with KAI2IA in the presence of (-)-germacrene D. As to expression, mainly expressed in fully expanded leaves, lateral roots, axillary and shoot apex, and, to a lower extent, in internodes and nodes.

The protein resides in the nucleus. Its subcellular location is the cytoplasm. In terms of biological role, component of SCF(ASK-cullin-F-box) E3 ubiquitin ligase complexes, which may mediate the ubiquitination and subsequent proteasomal degradation of target proteins. Is necessary for responses to strigolactones and may be involved in the ubiquitin-mediated degradation of specific proteins that activate axillary growth. Targets probably SMAX1A to degradation upon the formation of an E3 SCF ubiquitin ligase complex (ASK-cullin-F-box) containing MAX2B and KAI2IA in response to (-)-germacrene D in the stigma. This is F-box protein MAX2 homolog B from Petunia hybrida (Petunia).